The sequence spans 513 residues: ATP synthase subunit alpha (513 aa).

169–176 (GDRQVGKT) provides a ligand contact to ATP.

The protein belongs to the ATPase alpha/beta chains family. As to quaternary structure, F-type ATPases have 2 components, CF(1) - the catalytic core - and CF(0) - the membrane proton channel. CF(1) has five subunits: alpha(3), beta(3), gamma(1), delta(1), epsilon(1). CF(0) has three main subunits: a(1), b(2) and c(9-12). The alpha and beta chains form an alternating ring which encloses part of the gamma chain. CF(1) is attached to CF(0) by a central stalk formed by the gamma and epsilon chains, while a peripheral stalk is formed by the delta and b chains.

It localises to the cell inner membrane. It catalyses the reaction ATP + H2O + 4 H(+)(in) = ADP + phosphate + 5 H(+)(out). In terms of biological role, produces ATP from ADP in the presence of a proton gradient across the membrane. The alpha chain is a regulatory subunit. This chain is ATP synthase subunit alpha, found in Aeromonas hydrophila subsp. hydrophila (strain ATCC 7966 / DSM 30187 / BCRC 13018 / CCUG 14551 / JCM 1027 / KCTC 2358 / NCIMB 9240 / NCTC 8049).